Consider the following 547-residue polypeptide: Kelch repeat and BTB domain-containing protein 2 (547 aa).

One can recognise a BTB domain in the interval 20–89 (CDVIITIGDG…LYNRHISSMN (70 aa)). Kelch repeat units lie at residues 295 to 342 (DIII…VIDD), 343 to 389 (TIYA…VLDQ), and 391 to 454 (IYII…SHKD).

Interacts (via BTB domain) with host CUL3.

The protein resides in the host cytoplasm. Functionally, probable substrate-specific adapter of CUL3-containing E3 ubiquitin-protein ligases which mediate the ubiquitination and subsequent proteasomal degradation of host target proteins. This Bos taurus (Bovine) protein is Kelch repeat and BTB domain-containing protein 2 (KBTB2).